We begin with the raw amino-acid sequence, 325 residues long: Beta-ketoacyl-[acyl-carrier-protein] synthase III (325 aa).

Residues Cys119 and His252 contribute to the active site. The interval Gln253–Arg257 is ACP-binding. Residue Asn282 is part of the active site.

This sequence belongs to the thiolase-like superfamily. FabH family. In terms of assembly, homodimer.

Its subcellular location is the cytoplasm. The catalysed reaction is malonyl-[ACP] + acetyl-CoA + H(+) = 3-oxobutanoyl-[ACP] + CO2 + CoA. Its pathway is lipid metabolism; fatty acid biosynthesis. Functionally, catalyzes the condensation reaction of fatty acid synthesis by the addition to an acyl acceptor of two carbons from malonyl-ACP. Catalyzes the first condensation reaction which initiates fatty acid synthesis and may therefore play a role in governing the total rate of fatty acid production. Possesses both acetoacetyl-ACP synthase and acetyl transacylase activities. Its substrate specificity determines the biosynthesis of branched-chain and/or straight-chain of fatty acids. The sequence is that of Beta-ketoacyl-[acyl-carrier-protein] synthase III from Paracidovorax citrulli (strain AAC00-1) (Acidovorax citrulli).